The sequence spans 198 residues: Dual specificity protein phosphatase 13B (198 aa).

Residues 45-193 enclose the Tyrosine-protein phosphatase domain; the sequence is HINEVWPNLF…LQVLDNRLRR (149 aa). The active-site Phosphocysteine intermediate is C138.

Belongs to the protein-tyrosine phosphatase family. Non-receptor class dual specificity subfamily. Most abundantly expressed in the testis.

The enzyme catalyses O-phospho-L-tyrosyl-[protein] + H2O = L-tyrosyl-[protein] + phosphate. It catalyses the reaction O-phospho-L-seryl-[protein] + H2O = L-seryl-[protein] + phosphate. It carries out the reaction O-phospho-L-threonyl-[protein] + H2O = L-threonyl-[protein] + phosphate. Dual specificity phosphatase that dephosphorylates MAPK8/JNK and MAPK14/p38, but not MAPK1/ERK2, in vitro. Exhibits intrinsic phosphatase activity towards both phospho-seryl/threonyl and -tyrosyl residues, with similar specific activities in vitro. The chain is Dual specificity protein phosphatase 13B from Mus musculus (Mouse).